A 357-amino-acid chain; its full sequence is Red-sensitive opsin (357 aa).

Topologically, residues 1–49 are extracellular; sequence MAEQWGKQVFAARRQNEDTTRGSAFTYTNSNHTRDPFEGPNYHIAPRWV. Asn31 carries N-linked (GlcNAc...) asparagine glycosylation. A helical membrane pass occupies residues 50–74; it reads YNLATLWMFFVVVLSVFTNGLVLVA. Over 75 to 86 the chain is Cytoplasmic; it reads TAKFKKLRHPLN. The chain crosses the membrane as a helical span at residues 87–112; the sequence is WILSNLAIADLGETVFASTISVCNQF. The Extracellular segment spans residues 113 to 126; sequence FGYFILGHPMCVFE. A disulfide bridge connects residues Cys123 and Cys200. Residues 127–146 form a helical membrane-spanning segment; that stretch reads GYVVSTCGIAALWSLTIISW. The Cytoplasmic segment spans residues 147–165; the sequence is ERWVVVCKPFGNVKFDAKW. A helical transmembrane segment spans residues 166 to 189; the sequence is AIGGIVFSWVWSAVWCAPPVFGWS. Topologically, residues 190–215 are extracellular; the sequence is RYWPHGLKTSCGPDVFSGSDDPGVQS. A helical transmembrane segment spans residues 216–243; sequence YMIVLMITCCIIPLAIIILCYLAVWLAI. Over 244–265 the chain is Cytoplasmic; it reads RAVAMQQKESESTQKAEREVSR. A helical membrane pass occupies residues 266-289; sequence MVVVMIVAYCVCWGPYTFFACFAA. Over 290 to 297 the chain is Extracellular; it reads ANPGYAFH. Residues 298-322 traverse the membrane as a helical segment; sequence PLAAAMPAYFAKSATIYNPVIYVFM. An N6-(retinylidene)lysine modification is found at Lys309. The Cytoplasmic segment spans residues 323–357; it reads NRQFRTCIMQLFGKQVDDGSEVSTSKTEVSSVAPA.

The protein belongs to the G-protein coupled receptor 1 family. Opsin subfamily. In terms of processing, phosphorylated on some or all of the serine and threonine residues present in the C-terminal region. The color pigments are found in the cone photoreceptor cells.

The protein localises to the membrane. In terms of biological role, visual pigments are the light-absorbing molecules that mediate vision. They consist of an apoprotein, opsin, covalently linked to cis-retinal. This Oryzias latipes (Japanese rice fish) protein is Red-sensitive opsin.